We begin with the raw amino-acid sequence, 269 residues long: 4-hydroxy-tetrahydrodipicolinate reductase (269 aa).

NAD(+) contacts are provided by residues glycine 11 to methionine 16 and glutamate 37. Arginine 38 lines the NADP(+) pocket. Residues glycine 101 to threonine 103 and alanine 125 to methionine 128 contribute to the NAD(+) site. Residue histidine 158 is the Proton donor/acceptor of the active site. Position 159 (histidine 159) interacts with (S)-2,3,4,5-tetrahydrodipicolinate. The active-site Proton donor is lysine 162. Glycine 168 to threonine 169 contacts (S)-2,3,4,5-tetrahydrodipicolinate.

The protein belongs to the DapB family.

The protein resides in the cytoplasm. It carries out the reaction (S)-2,3,4,5-tetrahydrodipicolinate + NAD(+) + H2O = (2S,4S)-4-hydroxy-2,3,4,5-tetrahydrodipicolinate + NADH + H(+). The catalysed reaction is (S)-2,3,4,5-tetrahydrodipicolinate + NADP(+) + H2O = (2S,4S)-4-hydroxy-2,3,4,5-tetrahydrodipicolinate + NADPH + H(+). It functions in the pathway amino-acid biosynthesis; L-lysine biosynthesis via DAP pathway; (S)-tetrahydrodipicolinate from L-aspartate: step 4/4. In terms of biological role, catalyzes the conversion of 4-hydroxy-tetrahydrodipicolinate (HTPA) to tetrahydrodipicolinate. This Cereibacter sphaeroides (strain ATCC 17029 / ATH 2.4.9) (Rhodobacter sphaeroides) protein is 4-hydroxy-tetrahydrodipicolinate reductase.